The primary structure comprises 490 residues: NAI2-like protein (490 aa).

Residues 1 to 24 (MGRKYVVLGLAVCLFLSSFNEVSC) form the signal peptide. Disordered regions lie at residues 43-83 (EEGE…VDKF) and 155-206 (AATN…FNKG). Positions 136–163 (IADERRQRLEDIERKLKAAAATNIVVED) form a coiled coil. Basic and acidic residues predominate over residues 171 to 183 (KVEETQEVVKFES). Positions 184–199 (ESSSASSESRRQSSSS) are enriched in low complexity. Residues 433–465 (TFEKTVANLSRVIEEASQAYEEYHVVVRKWKEE) adopt a coiled-coil conformation.

The protein is NAI2-like protein of Arabidopsis thaliana (Mouse-ear cress).